The sequence spans 133 residues: Salivary cystatin-L (133 aa).

A signal peptide spans 1–19 (MTASFALVLLLGGVAVCIA). The Cystatin domain maps to 29-115 (KANHQANPEY…VAQRTCTTVV (87 aa)).

The protein belongs to the cystatin family. In terms of tissue distribution, salivary gland.

The protein localises to the secreted. Functionally, inhibitor of cysteine proteinases. Inhibits host cathepsin L (CTSL) and S (CTSS). Modulates production of various cytokines and chemokines in lipopolysaccharide (LPS)-stimulated mouse dendritic cell. Suppresses maturation of mouse bone-marrow-derived dendritic cells (BMDCs). The sequence is that of Salivary cystatin-L from Ixodes persulcatus (Taiga tick).